A 226-amino-acid polypeptide reads, in one-letter code: ATP synthase F(0) complex subunit a (226 aa).

6 helical membrane passes run 11-31 (APSM…SILF), 68-88 (WALM…LGLL), 97-117 (QLSM…ITGF), 138-158 (IPML…ALAV), 164-184 (ITAG…LINI), and 189-209 (AFIT…VALI).

The protein belongs to the ATPase A chain family. Component of the ATP synthase complex composed at least of ATP5F1A/subunit alpha, ATP5F1B/subunit beta, ATP5MC1/subunit c (homooctomer), MT-ATP6/subunit a, MT-ATP8/subunit 8, ATP5ME/subunit e, ATP5MF/subunit f, ATP5MG/subunit g, ATP5MK/subunit k, ATP5MJ/subunit j, ATP5F1C/subunit gamma, ATP5F1D/subunit delta, ATP5F1E/subunit epsilon, ATP5PF/subunit F6, ATP5PB/subunit b, ATP5PD/subunit d, ATP5PO/subunit OSCP. ATP synthase complex consists of a soluble F(1) head domain (subunits alpha(3) and beta(3)) - the catalytic core - and a membrane F(0) domain - the membrane proton channel (subunits c, a, 8, e, f, g, k and j). These two domains are linked by a central stalk (subunits gamma, delta, and epsilon) rotating inside the F1 region and a stationary peripheral stalk (subunits F6, b, d, and OSCP). Interacts with DNAJC30; interaction is direct.

Its subcellular location is the mitochondrion inner membrane. It carries out the reaction H(+)(in) = H(+)(out). In terms of biological role, subunit a, of the mitochondrial membrane ATP synthase complex (F(1)F(0) ATP synthase or Complex V) that produces ATP from ADP in the presence of a proton gradient across the membrane which is generated by electron transport complexes of the respiratory chain. ATP synthase complex consist of a soluble F(1) head domain - the catalytic core - and a membrane F(1) domain - the membrane proton channel. These two domains are linked by a central stalk rotating inside the F(1) region and a stationary peripheral stalk. During catalysis, ATP synthesis in the catalytic domain of F(1) is coupled via a rotary mechanism of the central stalk subunits to proton translocation. With the subunit c (ATP5MC1), forms the proton-conducting channel in the F(0) domain, that contains two crucial half-channels (inlet and outlet) that facilitate proton movement from the mitochondrial intermembrane space (IMS) into the matrix. Protons are taken up via the inlet half-channel and released through the outlet half-channel, following a Grotthuss mechanism. The protein is ATP synthase F(0) complex subunit a of Canis lupus familiaris (Dog).